A 307-amino-acid chain; its full sequence is Protease HtpX homolog (307 aa).

2 helical membrane-spanning segments follow: residues 10 to 30 (VITI…AYGL) and 40 to 60 (ISII…QWLV). His-144 serves as a coordination point for Zn(2+). Glu-145 is a catalytic residue. His-148 provides a ligand contact to Zn(2+). 2 consecutive transmembrane segments (helical) span residues 156–176 (LLLA…SMIF) and 187–207 (FFLV…MILG). Glu-213 contributes to the Zn(2+) binding site.

Belongs to the peptidase M48B family. It depends on Zn(2+) as a cofactor.

It is found in the cell membrane. This Picrophilus torridus (strain ATCC 700027 / DSM 9790 / JCM 10055 / NBRC 100828 / KAW 2/3) protein is Protease HtpX homolog.